The primary structure comprises 94 residues: Cytochrome c-551 (94 aa).

The first 14 residues, 1-14 (MAFTAMTVAPSALA), serve as a signal peptide directing secretion. 4 residues coordinate heme c: C24, C27, H28, and M73.

Binds 1 heme c group covalently per subunit.

Efficiently couple electron transfer between the cytochrome bc1 complex and the photosynthetic reaction center. This Allochromatium vinosum (strain ATCC 17899 / DSM 180 / NBRC 103801 / NCIMB 10441 / D) (Chromatium vinosum) protein is Cytochrome c-551.